Consider the following 853-residue polypeptide: EF-hand domain-containing family member B (853 aa).

Disordered regions lie at residues 1 to 31 (MCSF…TRAP) and 244 to 266 (AQQP…PGNI). EF-hand domains are found at residues 581-616 (QNFD…ANLH) and 617-652 (LDKM…KDRI). Asp-594, Asp-598, Glu-605, Asp-630, Asp-632, Asp-634, and Glu-641 together coordinate Ca(2+).

As to quaternary structure, microtubule inner protein component of sperm flagellar doublet microtubules. Interacts with STIM1 and ORAI1; the interactions take place upon Ca(2+)-store depletion and dissociate through a Ca(2+)-dependent mechanism. Interaction with STIM1 inhibits STIM1 interaction with SARAF.

Its subcellular location is the cytoplasm. The protein localises to the cytoskeleton. The protein resides in the cilium axoneme. It localises to the flagellum axoneme. In terms of biological role, microtubule inner protein (MIP) part of the dynein-decorated doublet microtubules (DMTs) in cilia axoneme, which is required for motile cilia beating. Cytosolic sensor for calcium, modulates the interaction of STIM1 and ORAI1 upon store depletion and the activation of store-operated Ca(2+) entry (SOCE) and NFAT translocation from cytosol to nucleus. This Mus musculus (Mouse) protein is EF-hand domain-containing family member B.